We begin with the raw amino-acid sequence, 285 residues long: Bifunctional protein FolD (285 aa).

Residues 165–167 and serine 190 each bind NADP(+); that span reads GRS.

The protein belongs to the tetrahydrofolate dehydrogenase/cyclohydrolase family. Homodimer.

The catalysed reaction is (6R)-5,10-methylene-5,6,7,8-tetrahydrofolate + NADP(+) = (6R)-5,10-methenyltetrahydrofolate + NADPH. The enzyme catalyses (6R)-5,10-methenyltetrahydrofolate + H2O = (6R)-10-formyltetrahydrofolate + H(+). It functions in the pathway one-carbon metabolism; tetrahydrofolate interconversion. Its function is as follows. Catalyzes the oxidation of 5,10-methylenetetrahydrofolate to 5,10-methenyltetrahydrofolate and then the hydrolysis of 5,10-methenyltetrahydrofolate to 10-formyltetrahydrofolate. The chain is Bifunctional protein FolD from Burkholderia pseudomallei (strain 1106a).